Consider the following 174-residue polypeptide: Variant surface antigen B (174 aa).

A signal peptide spans 1 to 29 (MKKSIFSKKLLVSFGSLVALASIPLIAIS). Residue Cys-30 is the site of N-palmitoyl cysteine attachment. The S-diacylglycerol cysteine moiety is linked to residue Cys-30. The tract at residues 32–174 (QTNTDKSQQP…SQDSGNGSTK (143 aa)) is disordered. Residues 38 to 49 (SQQPGSGSSTSG) are compositionally biased toward low complexity. Residues 50-75 (GQSGTGLGSGTTTGGQSGTTTGGRSG) are compositionally biased toward gly residues. A compositionally biased stretch (low complexity) spans 76–97 (SGSSSSTTGGQTGTGSDSQDSG). Tandem repeats lie at residues 88 to 99 (GTGSDSQDSGAK), 100 to 111 (GTGSDSQDSGAK), 112 to 123 (GTGSDSQDSGAK), 124 to 135 (GTGSDSQDSGAK), 136 to 147 (GTGSDSQDSGAK), 148 to 159 (GTGSDSQDSGAK), and 160 to 171 (GTGSDSQDSGNG). The interval 88 to 171 (GTGSDSQDSG…GSDSQDSGNG (84 aa)) is 7 X 12 AA tandem repeats. Residues 102–174 (GSDSQDSGAK…SQDSGNGSTK (73 aa)) show a composition bias toward polar residues.

Its subcellular location is the cell membrane. Its function is as follows. Responsible for the antigenic diversity for host adaptation. The sequence is that of Variant surface antigen B (vlpB) from Mesomycoplasma hyorhinis (Mycoplasma hyorhinis).